Reading from the N-terminus, the 142-residue chain is Hemoglobin subunit epsilon (142 aa).

In terms of domain architecture, Globin spans 3 to 142; that stretch reads HFTAEEKAAI…KLVSAVAIAL (140 aa). Phosphoserine occurs at positions 14 and 51. Heme b-binding residues include His64 and His93.

The protein belongs to the globin family. As to quaternary structure, heterotetramer of two alpha chains and two epsilon chains in early embryonic hemoglobin Gower-2; two zeta chains and two epsilon chains in early embryonic hemoglobin Gower-1. Red blood cells.

In terms of biological role, the epsilon chain is a beta-type chain of early mammalian embryonic hemoglobin. The protein is Hemoglobin subunit epsilon (HBE1) of Callithrix geoffroyi (Geoffroy's marmoset).